Consider the following 109-residue polypeptide: Sulredoxin (109 aa).

The region spanning 3–107 (WKRTISAKAL…IRDNNGWIEV (105 aa)) is the Rieske domain. [2Fe-2S] cluster is bound by residues cysteine 43, histidine 45, cysteine 62, and histidine 65.

In terms of assembly, homooligomeric. [2Fe-2S] cluster serves as cofactor.

It is found in the cytoplasm. Its function is as follows. Not yet known. The sequence is that of Sulredoxin (sdx) from Sulfurisphaera tokodaii (strain DSM 16993 / JCM 10545 / NBRC 100140 / 7) (Sulfolobus tokodaii).